The sequence spans 1145 residues: DNA mismatch repair protein msh-3 (1145 aa).

Disordered stretches follow at residues 1–183 (MAGP…GAKT) and 857–879 (SSSA…LAQL). Residues 13–33 (ASISSFFTPRNTSPLVNLSQN) show a composition bias toward polar residues. Basic and acidic residues predominate over residues 121–131 (AERKKKEELHR). Acidic residues predominate over residues 158 to 169 (GEGEEGEDDEEE). Residues 183–307 (TGKLTPMELQ…RKLTNVYTKG (125 aa)) are mispair-binding domain. 882–889 (GPNMGGKS) lines the ATP pocket. Residues 1030-1056 (KSRTSMDDDAMEVDGDGDGQEGAGADK) form a disordered region. The span at 1036–1048 (DDDAMEVDGDGDG) shows a compositional bias: acidic residues.

The protein belongs to the DNA mismatch repair MutS family. MSH3 subfamily. In terms of assembly, heterodimer consisting of msh-2-msh-3 (MutS beta). Forms a ternary complex with MutL alpha (mlh-1-pms-1).

The protein localises to the nucleus. In terms of biological role, component of the post-replicative DNA mismatch repair system (MMR). Heterodimerizes with msh-2 to form MutS beta, which binds to DNA mismatches thereby initiating DNA repair. Msh-3 provides substrate-binding and substrate specificity to the complex. When bound, the MutS beta heterodimer bends the DNA helix and shields approximately 20 base pairs. Acts mainly to repair insertion-deletion loops (IDLs) from 2 to 13 nucleotides in size, but can also repair base-base and single insertion-deletion mismatches that occur during replication. After mismatch binding, forms a ternary complex with the MutL alpha heterodimer, which is thought to be responsible for directing the downstream MMR events, including strand discrimination, excision, and resynthesis. ATP binding and hydrolysis play a pivotal role in mismatch repair functions. This chain is DNA mismatch repair protein msh-3 (msh-3), found in Neurospora crassa (strain ATCC 24698 / 74-OR23-1A / CBS 708.71 / DSM 1257 / FGSC 987).